An 898-amino-acid chain; its full sequence is Interleukin enhancer-binding factor 3 (898 aa).

A DZF domain is found at 5 to 378; that stretch reads RIFVNDDRHV…PMKRPMEEDG (374 aa). A disordered region spans residues 52–85; sequence QEKGNSELSEAENMDTPPDDESKEGAGEQKAEHM. Over residues 60–73 the composition is skewed to acidic residues; sequence SEAENMDTPPDDES. T67 is subject to Phosphothreonine. Over residues 74-85 the composition is skewed to basic and acidic residues; it reads KEGAGEQKAEHM. K100 carries the post-translational modification N6-acetyllysine. T188 is subject to Phosphothreonine; by PKR. S190 bears the Phosphoserine mark. A Glycyl lysine isopeptide (Lys-Gly) (interchain with G-Cter in ubiquitin) cross-link involves residue K297. T315 is modified (phosphothreonine; by PKR). A Glycyl lysine isopeptide (Lys-Gly) (interchain with G-Cter in SUMO1) cross-link involves residue K348. A disordered region spans residues 363–402; sequence TTYAITPMKRPMEEDGEEKSPSKKKKKIQKKEEKADPPQA. The short motif at 371–389 is the Bipartite nuclear localization signal element; sequence KRPMEEDGEEKSPSKKKKK. Basic and acidic residues predominate over residues 372-383; it reads RPMEEDGEEKSP. Phosphoserine occurs at positions 382 and 384. A Glycyl lysine isopeptide (Lys-Gly) (interchain with G-Cter in SUMO2) cross-link involves residue K396. In terms of domain architecture, DRBM 1 spans 398-467; that stretch reads DPPQAMNALM…AVKVLQDMGL (70 aa). At K460 the chain carries N6-acetyllysine. 2 disordered regions span residues 466–495 and 505–524; these read GLPTGAEGRDSSKGEDSAEESDGKPAIVAP and PSSVFPSDATTEQGPILTKH. The segment covering 472–481 has biased composition (basic and acidic residues); that stretch reads EGRDSSKGED. Residues S476, S477, S482, and S486 each carry the phosphoserine modification. Residue K489 forms a Glycyl lysine isopeptide (Lys-Gly) (interchain with G-Cter in SUMO2) linkage. In terms of domain architecture, DRBM 2 spans 524-590; it reads HGKNPVMELN…ALAALEKLFP (67 aa). Position 592 is a phosphothreonine (T592). Residues 609 to 898 are interaction with PRMT1; it reads RGGPKFAAKP…TEHSMNYQYR (290 aa). Disordered regions lie at residues 631–661 and 719–898; these read NEVPPPPNIRGRGRGGNIRGRGRGRGFGGAN and QGDS…YQYR. Gly residues predominate over residues 644–661; the sequence is RGGNIRGRGRGRGFGGAN. Composition is skewed to low complexity over residues 745–769, 783–794, and 802–812; these read SYSSGYQSHQGQQQPYNQSQYSSYG, GSYSSYSNSYNS, and DYSYDSKFNYS. 4 positions are modified to phosphoserine: S794, S812, S814, and S818. Positions 813–822 are enriched in gly residues; it reads GSGGRSGGNS. Low complexity predominate over residues 823 to 834; the sequence is YGSSGSSSYNTG. Over residues 835–845 the composition is skewed to gly residues; that stretch reads SHGGYGTGSGG. A compositionally biased stretch (low complexity) spans 846–886; it reads SSSYQGKQGGYSSQSNYSSPGSSQSYSGPASSYQSSQGGYS.

Identified in a IGF2BP1-dependent mRNP granule complex containing untranslated mRNAs. Interacts with FUS and SMN. Interacts (via C-terminus) with PRMT1. Forms a complex with ILF2. Can also bind to PRKDC/XRCC7: this may stabilize the interaction of PRKDC/XRCC7 and the heterodimeric complex of XRCC6/KU70 and XRCC5/KU80. Forms a heteromeric complex with ZNF346 and ILF3. Found in a nuclear export complex with XPO5, ILF3, Ran and double-stranded RNA or double-stranded minihelix VA1 RNA. Found in a nuclear export complex with XPO5, RAN, ILF3, ZNF346 and double-stranded RNA. Interacts with XPO5 and ZNF346. Forms a complex with ILF2, YLPM1, KHDRBS1, RBMX, NCOA5 and PPP1CA. Interacts with AGO1 and AGO2. Interacts with DHX36; this interaction occurs in a RNA-dependent manner. Interacts with ELAVL1; this interaction occurs in a RNA-dependent manner. Interacts with HAVCR2; this interaction promotes ILF3 ubiquitination and subsequent degradation. Phosphorylated at Thr-188 and Thr-315 by PKR in response to RNA viruses. This phosphorylation results in the dissociation of ILF2 from the ILF2-ILF3 complex resulting in a cytoplasmic sequestration of ILF3 where it can bind to viral RNAs and impede viral replication. In terms of processing, methylated by protein arginine N-methyltransferase 1. Ubiquitous. Expressed at high levels in the thymus, testis, ovary and at lower levelss in the spleen.

The protein localises to the nucleus. It is found in the nucleolus. Its subcellular location is the cytoplasm. RNA-binding protein that plays an essential role in the biogenesis of circular RNAs (circRNAs) which are produced by back-splicing circularization of pre-mRNAs. Within the nucleus, promotes circRNAs processing by stabilizing the regulatory elements residing in the flanking introns of the circularized exons. Plays thereby a role in the back-splicing of a subset of circRNAs. As a consequence, participates in a wide range of transcriptional and post-transcriptional processes. Binds to poly-U elements and AU-rich elements (AREs) in the 3'-UTR of target mRNAs. Upon viral infection, ILF3 accumulates in the cytoplasm and participates in the innate antiviral response. Mechanistically, ILF3 becomes phosphorylated and activated by the double-stranded RNA-activated protein kinase/PKR which releases ILF3 from cellular mature circRNAs. In turn, unbound ILF3 molecules are able to interact with and thus inhibit viral mRNAs. The protein is Interleukin enhancer-binding factor 3 (Ilf3) of Mus musculus (Mouse).